Here is a 331-residue protein sequence, read N- to C-terminus: Aromatic 2-oxoacid reductase (331 aa).

NAD(+) is bound by residues 154–155 (RI), Asp-175, 205–206 (AP), Asn-211, 232–234 (AAR), and Asp-258. The active site involves Arg-234. Residue Glu-263 is part of the active site. His-295 serves as the catalytic Proton donor.

The protein belongs to the D-isomer specific 2-hydroxyacid dehydrogenase family.

It carries out the reaction (R)-3-phenyllactate + NAD(+) = 3-phenylpyruvate + NADH + H(+). The catalysed reaction is (2R)-2-hydroxy-3-(4-hydroxyphenyl)propanoate + NAD(+) = 3-(4-hydroxyphenyl)pyruvate + NADH + H(+). The enzyme catalyses 3-(indol-3-yl)lactate + NAD(+) = indole-3-pyruvate + NADH + H(+). It functions in the pathway amino-acid degradation. Its function is as follows. Essential for the reductive metabolism of L-phenylalanine, L-tyrosine and L-tryptophan. Catalyzes the conversion of phenylpyruvic acid to phenyllactic acid, 4-hydroxy-phenylpyruvic acid to 4-hydroxy-phenyllactic acid, and indolepyruvic acid to indolelactic acid. The sequence is that of Aromatic 2-oxoacid reductase from Clostridium sporogenes (strain ATCC 7955 / DSM 767 / NBRC 16411 / NCIMB 8053 / NCTC 8594 / PA 3679).